The sequence spans 107 residues: uncharacterized protein (107 aa).

Residues 52 to 72 (LIIHDLFIYIFILNFFFFPFC) form a helical membrane-spanning segment.

The protein resides in the membrane. This is an uncharacterized protein from Saccharomyces cerevisiae (strain ATCC 204508 / S288c) (Baker's yeast).